The primary structure comprises 224 residues: Tumor protein D52 (224 aa).

A phosphoserine mark is found at Ser-36 and Ser-40. A coiled-coil region spans residues Ala-62–Asn-114. Ser-176 is subject to Phosphoserine. The tract at residues Lys-187 to Leu-224 is disordered. The span at Asn-203–Thr-213 shows a compositional bias: low complexity. Residue Ser-223 is modified to Phosphoserine.

This sequence belongs to the TPD52 family. As to quaternary structure, forms a homodimer or heterodimer with other members of the family. All isoforms interact with several 14-3-3 proteins. In terms of tissue distribution, isoform 2 is expressed in colon, breast, prostate, pancreas and kidney tumor cell lines. Isoform 2 is expressed at high levels in kidney, prostate, brain, small intestine and pancreas, at moderate levels in placenta and colon, at low levels in lung, liver and heart, and at very low levels in spleen, thymus, peripheral mononuclear blood cells, testis and ovary.

This is Tumor protein D52 (TPD52) from Homo sapiens (Human).